The chain runs to 1361 residues: uncharacterized protein (1361 aa).

It belongs to the IIV-6 261R/396L/443R family.

This is an uncharacterized protein from Invertebrate iridescent virus 6 (IIV-6).